Consider the following 315-residue polypeptide: Voltage-dependent calcium channel gamma-3 subunit (315 aa).

The next 4 helical transmembrane spans lie at 8–28 (IQML…TIAV), 104–124 (SSVF…CVAA), 135–155 (ILSA…GIIV), and 181–201 (FGAF…HIYI). Ser-248 carries the post-translational modification Phosphoserine.

This sequence belongs to the PMP-22/EMP/MP20 family. CACNG subfamily. In terms of assembly, the L-type calcium channel is composed of five subunits: alpha-1, alpha-2/delta, beta and gamma. Acts as an auxiliary subunit for AMPA-selective glutamate receptors (AMPARs). Found in a complex with GRIA1, GRIA2, GRIA3, GRIA4, CNIH2, CNIH3, CACNG2, CACNG4, CACNG5, CACNG7 and CACNG8. Interacts with AP4M1 and GRIA1; associates GRIA1 with the adaptor protein complex 4 (AP-4) to target GRIA1 to the somatodendritic compartment of neurons.

Its subcellular location is the membrane. Its function is as follows. Regulates the trafficking to the somatodendritic compartment and gating properties of AMPA-selective glutamate receptors (AMPARs). Promotes their targeting to the cell membrane and synapses and modulates their gating properties by slowing their rates of activation, deactivation and desensitization. Does not show subunit-specific AMPA receptor regulation and regulates all AMPAR subunits. Thought to stabilize the calcium channel in an inactivated (closed) state. In Homo sapiens (Human), this protein is Voltage-dependent calcium channel gamma-3 subunit (CACNG3).